A 91-amino-acid chain; its full sequence is Acyl-CoA-binding domain-containing protein 2 (91 aa).

Residues 3-88 (LQEEFEEFAE…VKQLLEEASA (86 aa)) form the ACB domain. Residues Lys-15, 30–34 (YGLYK), Lys-52, Lys-56, and Tyr-75 contribute to the an acyl-CoA site.

It belongs to the ACBP family. In terms of tissue distribution, highly expressed in leaves. Expressed at low levels in roots and seeds.

Its subcellular location is the cytoplasm. It is found in the cytosol. Functionally, binds medium- and long-chain acyl-CoA esters with high affinity. Can interact in vitro with linolenoyl-CoA. Binds palmitoyl-CoA and linoleoyl-CoA in vitro. Binds phosphatidic acid (PA) and phosphatidylcholine (PC) in vitro. May play a role in the biosynthesis of phospholipids. The polypeptide is Acyl-CoA-binding domain-containing protein 2 (Oryza sativa subsp. japonica (Rice)).